A 240-amino-acid chain; its full sequence is Octanoyltransferase (240 aa).

The disordered stretch occupies residues 1–22 (MGTTGTNDGATTPPANTSTPAV). The span at 10 to 21 (ATTPPANTSTPA) shows a compositional bias: low complexity. Residues 51–236 (EKIPDTILLL…NLVDALNGDL (186 aa)) enclose the BPL/LPL catalytic domain. Substrate contacts are provided by residues 89-96 (RGGRITWH), 166-168 (AIG), and 179-181 (GVA). The Acyl-thioester intermediate role is filled by C197.

It belongs to the LipB family.

The protein localises to the cytoplasm. The catalysed reaction is octanoyl-[ACP] + L-lysyl-[protein] = N(6)-octanoyl-L-lysyl-[protein] + holo-[ACP] + H(+). Its pathway is protein modification; protein lipoylation via endogenous pathway; protein N(6)-(lipoyl)lysine from octanoyl-[acyl-carrier-protein]: step 1/2. In terms of biological role, catalyzes the transfer of endogenously produced octanoic acid from octanoyl-acyl-carrier-protein onto the lipoyl domains of lipoate-dependent enzymes. Lipoyl-ACP can also act as a substrate although octanoyl-ACP is likely to be the physiological substrate. This is Octanoyltransferase from Corynebacterium jeikeium (strain K411).